The chain runs to 536 residues: uncharacterized protein (536 aa).

At 1–8 (MVSIKRYE) the chain is on the cytoplasmic side. A helical transmembrane segment spans residues 9–29 (IISFVIAAFFFLSGLSMWIAF). Over 30–502 (WPIFNSELRS…VWLGVIIVPR (473 aa)) the chain is Extracellular. 4 N-linked (GlcNAc...) asparagine glycosylation sites follow: N73, N236, N363, and N376. A helical membrane pass occupies residues 503 to 523 (IIEYLKFVLIFISICILTTLL). Residues 524–536 (VIRVRVKGTVSVV) are Cytoplasmic-facing.

This sequence belongs to the CD36 family.

Its subcellular location is the membrane. This is an uncharacterized protein from Caenorhabditis elegans.